The following is a 296-amino-acid chain: Phosphatidylglycerol--prolipoprotein diacylglyceryl transferase (296 aa).

Helical transmembrane passes span 17-37, 59-79, and 97-117; these read LAVRWYGLMYLVGFILAIVVG, MMFYGVLGVVLGGRLGYVLFY, and GGMSFHGGFLGVTLAMALFAW. A 1,2-diacyl-sn-glycero-3-phospho-(1'-sn-glycerol) is bound at residue arginine 142. Transmembrane regions (helical) follow at residues 230–250 and 265–285; these read MGAISALFLIGYGAARFTVEF and LSMGQWLSLPMIVAGVLMMIW.

The protein belongs to the Lgt family.

It is found in the cell inner membrane. It carries out the reaction L-cysteinyl-[prolipoprotein] + a 1,2-diacyl-sn-glycero-3-phospho-(1'-sn-glycerol) = an S-1,2-diacyl-sn-glyceryl-L-cysteinyl-[prolipoprotein] + sn-glycerol 1-phosphate + H(+). It functions in the pathway protein modification; lipoprotein biosynthesis (diacylglyceryl transfer). Catalyzes the transfer of the diacylglyceryl group from phosphatidylglycerol to the sulfhydryl group of the N-terminal cysteine of a prolipoprotein, the first step in the formation of mature lipoproteins. The polypeptide is Phosphatidylglycerol--prolipoprotein diacylglyceryl transferase (Burkholderia thailandensis (strain ATCC 700388 / DSM 13276 / CCUG 48851 / CIP 106301 / E264)).